A 1315-amino-acid polypeptide reads, in one-letter code: Probable nucleoporin C890.06 (1315 aa).

The protein belongs to the non-repetitive/WGA-negative nucleoporin family.

It is found in the cytoplasm. The protein localises to the nucleus. This is Probable nucleoporin C890.06 from Schizosaccharomyces pombe (strain 972 / ATCC 24843) (Fission yeast).